The chain runs to 1088 residues: Calcium-transporting ATPase 5, plasma membrane-type (1088 aa).

Residues 1-11 (MESASSSLATS) are compositionally biased toward low complexity. The segment at 1–32 (MESASSSLATSGRRRSSSGGGGGSWGSIGSAA) is disordered. At 1 to 198 (MESASSSLAT…FLWDACKDLT (198 aa)) the chain is on the cytoplasmic side. A helical transmembrane segment spans residues 199–219 (LIILMVAAAVSLALGITTEGI). The Extracellular segment spans residues 220 to 221 (KE). A helical membrane pass occupies residues 222–242 (GWYDGASIAFAVLLVVVVTAT). Over 243–338 (SDYKQSLQFQ…MSGCKVADGY (96 aa)) the chain is Cytoplasmic. The helical transmembrane segment at 339 to 359 (GTMLVTAVGINTEWGLLMASI) threads the bilayer. Over 360–375 (SEDSGEETPLQVRLNG) the chain is Extracellular. A helical transmembrane segment spans residues 376–396 (VATFIGMVGLSVALAVLVVLL). Over 397-425 (ARYFTGHTYNPDGSVQYVKGKMGVGQTIR) the chain is Cytoplasmic. The chain crosses the membrane as a helical span at residues 426 to 446 (GIVGIFTVAVTIVVVAVPEGL). The Extracellular portion of the chain corresponds to 447–851 (PLAVTLTLAF…GRSVYANIQK (405 aa)). The 4-aspartylphosphate intermediate role is filled by D486. N-linked (GlcNAc...) asparagine glycans are attached at residues N532, N569, and N737. Positions 794 and 798 each coordinate Mg(2+). A helical transmembrane segment spans residues 852-872 (FIQFQLTVNVAALIINVVAAV). Residues 873 to 880 (SSGNVPLN) are Cytoplasmic-facing. Residues 881–901 (AVQLLWVNLIMDTLGALALAT) form a helical membrane-spanning segment. The Extracellular portion of the chain corresponds to 902–919 (EPPTDHLMQRPPVGRREP). The helical transmembrane segment at 920–940 (LITNVMWRNLIIMALFQVIVL) threads the bilayer. Over 941-1000 (LTLNFRGTSLLQLKNDNQAHADKVKNTFIFNTFVLCQVFNEFNARKPDELNIFKGITGNH) the chain is Cytoplasmic. The helical transmembrane segment at 1001 to 1021 (LFMAIVAITVVLQALIVEFLG) threads the bilayer. Residues 1022–1030 (KFTSTTRLT) lie on the Extracellular side of the membrane. The helical transmembrane segment at 1031–1051 (WQLWLVSIGLAFFSWPLAFVG) threads the bilayer. Topologically, residues 1052–1088 (KLIPVPERPLGDFFACCCPGSKQAADAKGDDADHSDV) are cytoplasmic.

The protein belongs to the cation transport ATPase (P-type) (TC 3.A.3) family. Type IIB subfamily. Interacts with NOH1.

It localises to the cell membrane. The enzyme catalyses Ca(2+)(in) + ATP + H2O = Ca(2+)(out) + ADP + phosphate + H(+). With respect to regulation, activated by calmodulin. Its function is as follows. This magnesium-dependent enzyme catalyzes the hydrolysis of ATP coupled with the translocation of calcium from the cytosol out of the cell, into the endoplasmic reticulum, or into organelles. Involved in salt and drought stress tolerance. Involved in cold stress tolerance. This Oryza sativa subsp. japonica (Rice) protein is Calcium-transporting ATPase 5, plasma membrane-type.